The primary structure comprises 389 residues: MFQISELANYRLCKRCSGRIFAYHYHGISNLERGEYLQFAIGCETGNPDFSFVDSKNCDICHGIFDRFDDIYDLVAKKVGDAQYSTFLVGSVFPQDTIRMEEDIQKKFGSSGESIKKEFNREFGKYFSARTGKEYSQDNPDLTILVNAEYLFVDVKIRSIYIYGKYRKFRRDMPQTRWIHRPNGDTVESVIGSVFTRYAGGTNYYLHGSGREDVDVRMLGNGREFVLEVENPRYREFELDPVVKEINTSGKGVEIFDVKFSSHDAVSEVKLEKHRKVYDALVVSDRPIDESRLLEACINLTGKNIYQRTPLRVAQRRSDLVRTRRIDQVDLVGVSANEAEILISAEAGTYIKELVNGDGGRTRPSLSEMYGSPLNVKELDVIKICRGED.

The active-site Nucleophile is the Asp-213. Substrate-binding residues include Tyr-278 and Tyr-350.

This sequence belongs to the pseudouridine synthase Pus10 family.

The enzyme catalyses uridine(54) in tRNA = pseudouridine(54) in tRNA. The catalysed reaction is uridine(55) in tRNA = pseudouridine(55) in tRNA. Its function is as follows. Responsible for synthesis of pseudouridine from uracil-54 and uracil-55 in the psi GC loop of transfer RNAs. The polypeptide is tRNA pseudouridine synthase Pus10 (Thermoplasma acidophilum (strain ATCC 25905 / DSM 1728 / JCM 9062 / NBRC 15155 / AMRC-C165)).